A 779-amino-acid chain; its full sequence is Chloride channel protein CLC-c (779 aa).

S27 carries the post-translational modification Phosphoserine. The next 12 helical transmembrane spans lie at 92–112, 142–162, 190–210, 215–235, 257–277, 287–307, 341–361, 380–400, 466–486, 488–508, 520–540, and 541–561; these read TFLKWALAFLIGLATGLVGFL, FAFAGCNLILATAAASLCAFI, STLFVKIFGSIFGVAAGFVVG, MVHTGACIANLLGQGGSKKYR, GAAAGVAAAFRAPVGGVLFAL, ALLWRTFFTTAVVAVVLRSLI, LAIVFLGVIGGVLGSLYNYLV, IMLVMAVSILSSCCAFGLPWL, LAIFFVAVYCLGIITYGIAIP, GLFIPVILAGASYGRLVGRLL, SLLGAASFLGGTMRMTVSLCV, and ILLELTNNLLMLPLVMLVLLI. One can recognise a CBS 1 domain in the interval 601–659; sequence DVVSGALISFSRVEKVGVIWQALKMTRHNGFPVIDEPPFTEASELCGIALRSHLLVLLQ. At S672 the chain carries Phosphoserine. One can recognise a CBS 2 domain in the interval 713–777; the sequence is ITNTSPYTVL…VLGLYPHIDP (65 aa). The chain crosses the membrane as a helical span at residues 741–761; sequence HLCVVPKTPGRPPIVGILTRH.

This sequence belongs to the chloride channel (TC 2.A.49) family. Homodimer. Interacts with PP2A5. In terms of tissue distribution, broadly expressed in the plant.

It localises to the membrane. Voltage-gated chloride channel. This chain is Chloride channel protein CLC-c (CLC-C), found in Arabidopsis thaliana (Mouse-ear cress).